Reading from the N-terminus, the 161-residue chain is Ribosome maturation factor RimP (161 aa).

Belongs to the RimP family.

It localises to the cytoplasm. Required for maturation of 30S ribosomal subunits. This Desulfosudis oleivorans (strain DSM 6200 / JCM 39069 / Hxd3) (Desulfococcus oleovorans) protein is Ribosome maturation factor RimP.